The primary structure comprises 426 residues: Endoglucanase (426 aa).

A signal peptide spans 1–19 (MRRCMPLVAASVAALMLAG). A lipid anchor (N-palmitoyl cysteine) is attached at Cys20. A lipid anchor (S-diacylglycerol cysteine) is attached at Cys20. Positions 20–45 (CGGGDGDPSLSTASVSATDTTTLKPA) are excised as a propeptide. Glu249 serves as the catalytic Proton donor. Glu361 functions as the Nucleophile in the catalytic mechanism.

This sequence belongs to the glycosyl hydrolase 5 (cellulase A) family.

It is found in the cell membrane. The enzyme catalyses Endohydrolysis of (1-&gt;4)-beta-D-glucosidic linkages in cellulose, lichenin and cereal beta-D-glucans.. In Ralstonia solanacearum (Pseudomonas solanacearum), this protein is Endoglucanase (egl).